The chain runs to 161 residues: Alpha-crystallin A chain (161 aa).

A required for complex formation with BFSP1 and BFSP2 region spans residues 1 to 51; it reads ALGPFYPSRXXXXXXXXXXXXXXXXXXXXXXXXXXXXQSLFRTVLDSGISE. Gln38 bears the Deamidated glutamine; partial mark. The sHSP domain maps to 40-150; that stretch reads LFRTVLDSGI…SHSERAIPVS (111 aa). Residue Lys87 is modified to N6-acetyllysine. Position 88 (His88) interacts with Zn(2+). Asn89 carries the deamidated asparagine; partial modification. Positions 90 and 95 each coordinate Zn(2+). Position 110 is a phosphoserine (Ser110). Asn111 carries the deamidated asparagine; partial modification. Cysteines 119 and 130 form a disulfide. A Deamidated glutamine; partial modification is found at Gln135. The interval 140–161 is disordered; it reads ASHSERAIPVSREEKPSSAPSS. The span at 141–155 shows a compositional bias: basic and acidic residues; sequence SHSERAIPVSREEKP. Position 142 (His142) interacts with Zn(2+). Ser150 is a glycosylation site (O-linked (GlcNAc) serine).

This sequence belongs to the small heat shock protein (HSP20) family. As to quaternary structure, heteromer composed of three CRYAA and one CRYAB subunits. Inter-subunit bridging via zinc ions enhances stability, which is crucial as there is no protein turn over in the lens. Can also form homodimers and homotetramers (dimers of dimers) which serve as the building blocks of homooligomers. Within homooligomers, the zinc-binding motif is created from residues of 3 different molecules. His-88 and Glu-90 from one molecule are ligands of the zinc ion, and His-95 and His-142 residues from additional molecules complete the site with tetrahedral coordination geometry. Part of a complex required for lens intermediate filament formation composed of BFSP1, BFSP2 and CRYAA. Undergoes age-dependent proteolytical cleavage at the C-terminus.

It localises to the cytoplasm. Its subcellular location is the nucleus. Functionally, contributes to the transparency and refractive index of the lens. In its oxidized form (absence of intramolecular disulfide bond), acts as a chaperone, preventing aggregation of various proteins under a wide range of stress conditions. Required for the correct formation of lens intermediate filaments as part of a complex composed of BFSP1, BFSP2 and CRYAA. In Galegeeska rufescens (East African rufous sengi), this protein is Alpha-crystallin A chain (CRYAA).